We begin with the raw amino-acid sequence, 109 residues long: Large ribosomal subunit protein uL22 (109 aa).

It belongs to the universal ribosomal protein uL22 family. In terms of assembly, part of the 50S ribosomal subunit.

This protein binds specifically to 23S rRNA; its binding is stimulated by other ribosomal proteins, e.g. L4, L17, and L20. It is important during the early stages of 50S assembly. It makes multiple contacts with different domains of the 23S rRNA in the assembled 50S subunit and ribosome. Its function is as follows. The globular domain of the protein is located near the polypeptide exit tunnel on the outside of the subunit, while an extended beta-hairpin is found that lines the wall of the exit tunnel in the center of the 70S ribosome. The protein is Large ribosomal subunit protein uL22 of Polynucleobacter asymbioticus (strain DSM 18221 / CIP 109841 / QLW-P1DMWA-1) (Polynucleobacter necessarius subsp. asymbioticus).